The chain runs to 489 residues: Rhamnulokinase (489 aa).

An ATP-binding site is contributed by 13-17 (ASSGR). C68 and C222 are disulfide-bonded. Substrate-binding positions include G83 and 236–238 (HDT). D237 serves as the catalytic Proton acceptor. T259 contributes to the ATP binding site. N296 contributes to the substrate binding site. Q304 provides a ligand contact to ATP. C353 and C370 are oxidised to a cystine. Residue G402 participates in ATP binding. The cysteines at positions 413 and 417 are disulfide-linked.

The protein belongs to the rhamnulokinase family. As to quaternary structure, monomer. Mg(2+) is required as a cofactor.

It catalyses the reaction L-rhamnulose + ATP = L-rhamnulose 1-phosphate + ADP + H(+). The protein operates within carbohydrate degradation; L-rhamnose degradation; glycerone phosphate from L-rhamnose: step 2/3. Its function is as follows. Involved in the catabolism of L-rhamnose (6-deoxy-L-mannose). Catalyzes the transfer of the gamma-phosphate group from ATP to the 1-hydroxyl group of L-rhamnulose to yield L-rhamnulose 1-phosphate. The polypeptide is Rhamnulokinase (Escherichia coli O7:K1 (strain IAI39 / ExPEC)).